We begin with the raw amino-acid sequence, 163 residues long: Methyl-CpG-binding domain-containing protein 3 (163 aa).

The CW-type zinc-finger motif lies at 6–56 (TTLIDSYAAQCWKCLKVRSIESQEDYEEIRSKTLEKFFECKRCEEPGDMVM). One can recognise an MBD domain in the interval 65–137 (WFQDEHSIPK…EEVSFAAPKR (73 aa)). The tract at residues 140 to 163 (LKKKPVDSHSSSRNTEEDGVSRDA) is disordered. Residues 153–163 (NTEEDGVSRDA) show a composition bias toward basic and acidic residues.

The protein localises to the nucleus. In terms of biological role, probable transcriptional regulator. This Arabidopsis thaliana (Mouse-ear cress) protein is Methyl-CpG-binding domain-containing protein 3 (MBD3).